We begin with the raw amino-acid sequence, 196 residues long: Recombination protein RecR (196 aa).

A C4-type zinc finger spans residues 55–70 (CELCGNLESESPCSIC). The 96-residue stretch at 78–173 (DIVCVVEEIT…KLSFLAHGIP (96 aa)) folds into the Toprim domain.

It belongs to the RecR family.

May play a role in DNA repair. It seems to be involved in an RecBC-independent recombinational process of DNA repair. It may act with RecF and RecO. The polypeptide is Recombination protein RecR (Neorickettsia sennetsu (strain ATCC VR-367 / Miyayama) (Ehrlichia sennetsu)).